Consider the following 340-residue polypeptide: Mitochondrial distribution and morphology protein 12 (340 aa).

The SMP-LTD domain maps to 1–321 (MSIDLDWDGM…WPSWIKVSME (321 aa)). Disordered regions lie at residues 79-107 (HYLP…TNPI), 161-184 (SVRE…EDRE), and 319-340 (SMED…EDEH). The span at 89–106 (QRRSAPSTPHIHTNTTNP) shows a compositional bias: polar residues. The segment covering 321-340 (EDEDSDDEEGEEEGDQEDEH) has biased composition (acidic residues).

It belongs to the MDM12 family. As to quaternary structure, component of the ER-mitochondria encounter structure (ERMES) or MDM complex, composed of MMM1, MDM10, MDM12 and MDM34. An MMM1 homodimer associates with one molecule of MDM12 on each side in a pairwise head-to-tail manner, and the SMP-LTD domains of MMM1 and MDM12 generate a continuous hydrophobic tunnel for phospholipid trafficking.

It localises to the mitochondrion outer membrane. The protein resides in the endoplasmic reticulum membrane. Component of the ERMES/MDM complex, which serves as a molecular tether to connect the endoplasmic reticulum (ER) and mitochondria. Components of this complex are involved in the control of mitochondrial shape and protein biogenesis, and function in nonvesicular lipid trafficking between the ER and mitochondria. MDM12 is required for the interaction of the ER-resident membrane protein MMM1 and the outer mitochondrial membrane-resident beta-barrel protein MDM10. The MDM12-MMM1 subcomplex functions in the major beta-barrel assembly pathway that is responsible for biogenesis of all mitochondrial outer membrane beta-barrel proteins, and acts in a late step after the SAM complex. The MDM10-MDM12-MMM1 subcomplex further acts in the TOM40-specific pathway after the action of the MDM12-MMM1 complex. Essential for establishing and maintaining the structure of mitochondria and maintenance of mtDNA nucleoids. The protein is Mitochondrial distribution and morphology protein 12 of Yarrowia lipolytica (strain CLIB 122 / E 150) (Yeast).